Here is a 509-residue protein sequence, read N- to C-terminus: Telomeric repeat-binding factor 2-interacting protein 1 (509 aa).

The 91-residue stretch at 1–91 folds into the BRCT domain; the sequence is MAALGGLTHS…KLLDVDDYRL (91 aa). The segment at 93-168 is disordered; the sequence is GSHGRPRKSQ…RKKENKMDCS (76 aa). Polar residues predominate over residues 115-127; the sequence is VGESSQESDQKQQ. Basic and acidic residues predominate over residues 159 to 168; it reads RKKENKMDCS. A Myb-like domain is found at 185–239; sequence RRNVFTEKEDVAIMLYVRENAPHRGTGVSLWKEMEQKQVVKRTWQAIKNRYFRYL. Disordered regions lie at residues 249–359 and 399–423; these read LTDD…ENQD and DLPSSQSQTQVDEVSSSPDASESEG. Composition is skewed to basic and acidic residues over residues 286–296 and 321–344; these read GVAEKTGEKLS and VEERGQEVTEGAIKRSEGNKKSTE. Residues 401-418 are compositionally biased toward polar residues; it reads PSSQSQTQVDEVSSSPDA. The short motif at 493-509 is the Nuclear localization signal element; that stretch reads QKYGADNVAKRVAFLAS.

This sequence belongs to the RAP1 family. In terms of assembly, homodimer. Component of the shelterin complex (telosome). Interacts with terf2; the interaction is direct.

The protein localises to the nucleus. It is found in the chromosome. The protein resides in the telomere. In terms of biological role, acts both as a regulator of telomere function and as a transcription regulator. Involved in the regulation of telomere length and protection as a component of the shelterin complex (telosome). Does not bind DNA directly: recruited to telomeric double-stranded 5'-TTAGGG-3' repeats via its interaction with terf2. Independently of its function in telomeres, also acts as a transcription regulator: recruited to extratelomeric 5'-TTAGGG-3' sites via its association with terf2 or other factors, and regulates gene expression. This chain is Telomeric repeat-binding factor 2-interacting protein 1 (terf2ip), found in Xenopus tropicalis (Western clawed frog).